Reading from the N-terminus, the 182-residue chain is Inner membrane-spanning protein YciB (182 aa).

5 helical membrane passes run 20–42 (GGIYQATIVAMVATIVQILWVYY), 55–75 (LIMIMVFGSLTIFLHDSTFIL), 76–96 (LKPTALYWLFSGVLFVSAQFF), 123–143 (LNLAWSAFFFFMGFLNLYIAF), and 153–173 (FKLFGSTGLLIAFVIAQGFWM).

This sequence belongs to the YciB family.

The protein localises to the cell inner membrane. In terms of biological role, plays a role in cell envelope biogenesis, maintenance of cell envelope integrity and membrane homeostasis. The polypeptide is Inner membrane-spanning protein YciB (Polynucleobacter asymbioticus (strain DSM 18221 / CIP 109841 / QLW-P1DMWA-1) (Polynucleobacter necessarius subsp. asymbioticus)).